The sequence spans 193 residues: N-(5'-phosphoribosyl)anthranilate isomerase (193 aa).

It belongs to the TrpF family.

It carries out the reaction N-(5-phospho-beta-D-ribosyl)anthranilate = 1-(2-carboxyphenylamino)-1-deoxy-D-ribulose 5-phosphate. It participates in amino-acid biosynthesis; L-tryptophan biosynthesis; L-tryptophan from chorismate: step 3/5. The sequence is that of N-(5'-phosphoribosyl)anthranilate isomerase from Streptococcus mutans serotype c (strain ATCC 700610 / UA159).